Reading from the N-terminus, the 502-residue chain is Glutamate decarboxylase 1 (502 aa).

Phosphoserine is present on Ser-8. The residue at position 277 (Lys-277) is an N6-(pyridoxal phosphate)lysine. Residues 469 to 502 (LMVTVKKSDIDKQRDIITGWKKFVADRKKTSGIC) are calmodulin-binding.

The protein belongs to the group II decarboxylase family. As to quaternary structure, homohexamer. Interacts with calmodulin with a 1:3 stoichiometry. It depends on pyridoxal 5'-phosphate as a cofactor. In terms of tissue distribution, expressed in roots. Detected at low levels in shoots of young seedlings. Not detected in the root tips or in the central vascular bundle in the elongating region of mature roots.

The catalysed reaction is L-glutamate + H(+) = 4-aminobutanoate + CO2. Up-regulated by calmodulin binding at physiological pH. Functionally, catalyzes the conversion of glutamate to 4-aminobutanoate (GABA). The calmodulin-binding is calcium-dependent and it is proposed to directly or indirectly form a calcium regulated control of GABA biosynthesis. This Arabidopsis thaliana (Mouse-ear cress) protein is Glutamate decarboxylase 1 (GAD1).